The chain runs to 165 residues: Ribosome maturation factor RimM (165 aa).

Residues Pro-90 to Trp-161 enclose the PRC barrel domain.

Belongs to the RimM family. Binds ribosomal protein uS19.

It localises to the cytoplasm. Its function is as follows. An accessory protein needed during the final step in the assembly of 30S ribosomal subunit, possibly for assembly of the head region. Essential for efficient processing of 16S rRNA. May be needed both before and after RbfA during the maturation of 16S rRNA. It has affinity for free ribosomal 30S subunits but not for 70S ribosomes. This chain is Ribosome maturation factor RimM, found in Clostridium beijerinckii (strain ATCC 51743 / NCIMB 8052) (Clostridium acetobutylicum).